A 295-amino-acid chain; its full sequence is MADYLVKSLIDGGMFRAYVVDATETVAEAQQRHDTWSAATAALGRTLIGTMLLSTSLLKGDEKLTVKVNGHGPVGAIVVDGNANGTVKGYLQYPHTSLPLNEKHKIDVKKAVGVNGMLTVTKDQGLGQPYTGQVPLVSGELGEDFTYYLAKSEQIPSAVGVSVFVQPNNTVKVAGGFLIQVMPGASDEAIARLEQRIKEMPMVSELLLAGQTPEEILALLFKEEKIKIVQKMPVGFKCDCSKDRFAQSLASIQPAALQEMIDEDHGAEAVCHFCGTKYQFSEDDLRAILTEAQAK.

Disulfide bonds link Cys-238–Cys-240 and Cys-271–Cys-274.

Belongs to the HSP33 family. Under oxidizing conditions two disulfide bonds are formed involving the reactive cysteines. Under reducing conditions zinc is bound to the reactive cysteines and the protein is inactive.

It localises to the cytoplasm. Functionally, redox regulated molecular chaperone. Protects both thermally unfolding and oxidatively damaged proteins from irreversible aggregation. Plays an important role in the bacterial defense system toward oxidative stress. The chain is 33 kDa chaperonin from Levilactobacillus brevis (strain ATCC 367 / BCRC 12310 / CIP 105137 / JCM 1170 / LMG 11437 / NCIMB 947 / NCTC 947) (Lactobacillus brevis).